Reading from the N-terminus, the 373-residue chain is 4-hydroxy-3-methylbut-2-en-1-yl diphosphate synthase (flavodoxin) (373 aa).

[4Fe-4S] cluster is bound by residues cysteine 270, cysteine 273, cysteine 305, and glutamate 312.

The protein belongs to the IspG family. The cofactor is [4Fe-4S] cluster.

The catalysed reaction is (2E)-4-hydroxy-3-methylbut-2-enyl diphosphate + oxidized [flavodoxin] + H2O + 2 H(+) = 2-C-methyl-D-erythritol 2,4-cyclic diphosphate + reduced [flavodoxin]. It participates in isoprenoid biosynthesis; isopentenyl diphosphate biosynthesis via DXP pathway; isopentenyl diphosphate from 1-deoxy-D-xylulose 5-phosphate: step 5/6. In terms of biological role, converts 2C-methyl-D-erythritol 2,4-cyclodiphosphate (ME-2,4cPP) into 1-hydroxy-2-methyl-2-(E)-butenyl 4-diphosphate. In Pectobacterium atrosepticum (strain SCRI 1043 / ATCC BAA-672) (Erwinia carotovora subsp. atroseptica), this protein is 4-hydroxy-3-methylbut-2-en-1-yl diphosphate synthase (flavodoxin).